Consider the following 191-residue polypeptide: Peptidyl-tRNA hydrolase (191 aa).

Tyrosine 17 contributes to the tRNA binding site. The active-site Proton acceptor is histidine 22. The tRNA site is built by tyrosine 68, asparagine 70, and asparagine 116.

This sequence belongs to the PTH family. Monomer.

It is found in the cytoplasm. It catalyses the reaction an N-acyl-L-alpha-aminoacyl-tRNA + H2O = an N-acyl-L-amino acid + a tRNA + H(+). Its function is as follows. Hydrolyzes ribosome-free peptidyl-tRNAs (with 1 or more amino acids incorporated), which drop off the ribosome during protein synthesis, or as a result of ribosome stalling. Functionally, catalyzes the release of premature peptidyl moieties from peptidyl-tRNA molecules trapped in stalled 50S ribosomal subunits, and thus maintains levels of free tRNAs and 50S ribosomes. This chain is Peptidyl-tRNA hydrolase, found in Mycobacterium marinum (strain ATCC BAA-535 / M).